Here is a 153-residue protein sequence, read N- to C-terminus: Small ribosomal subunit protein bS16 (153 aa).

A disordered region spans residues Glu-130–Ala-153. Positions Ala-140–Ala-153 are enriched in acidic residues.

The protein belongs to the bacterial ribosomal protein bS16 family.

This is Small ribosomal subunit protein bS16 from Bifidobacterium longum subsp. infantis (strain ATCC 15697 / DSM 20088 / JCM 1222 / NCTC 11817 / S12).